Here is a 338-residue protein sequence, read N- to C-terminus: Glyceraldehyde-3-phosphate dehydrogenase (338 aa).

Residues 11–12 (TI) and Gly-111 contribute to the NAD(+) site. Position 140–142 (140–142 (SCN)) interacts with D-glyceraldehyde 3-phosphate. Residue Cys-141 is the Nucleophile of the active site. Arg-169 is an NAD(+) binding site. D-glyceraldehyde 3-phosphate is bound at residue 195–196 (HG). Residue Gln-302 participates in NAD(+) binding.

Belongs to the glyceraldehyde-3-phosphate dehydrogenase family. As to quaternary structure, homotetramer.

Its subcellular location is the cytoplasm. It catalyses the reaction D-glyceraldehyde 3-phosphate + phosphate + NADP(+) = (2R)-3-phospho-glyceroyl phosphate + NADPH + H(+). It carries out the reaction D-glyceraldehyde 3-phosphate + phosphate + NAD(+) = (2R)-3-phospho-glyceroyl phosphate + NADH + H(+). Its pathway is carbohydrate degradation; glycolysis; pyruvate from D-glyceraldehyde 3-phosphate: step 1/5. The chain is Glyceraldehyde-3-phosphate dehydrogenase (gap) from Methanobacterium formicicum.